Reading from the N-terminus, the 227-residue chain is GTP:AMP phosphotransferase AK3, mitochondrial (227 aa).

5 residues coordinate GTP: glycine 17, glycine 19, lysine 20, glycine 21, and threonine 22. Residue lysine 20 is modified to N6-succinyllysine. An N6-acetyllysine modification is found at lysine 34. Position 37 is a phosphoserine (serine 37). The NMP stretch occupies residues 37 to 66; the sequence is SSGDLLRDNMLRGTEIGVLAKAFIDQGKLI. Serine 38 and arginine 43 together coordinate AMP. Lysine 57 is subject to N6-succinyllysine. An AMP-binding site is contributed by lysine 64. 2 positions are modified to N6-acetyllysine; alternate: lysine 64 and lysine 80. N6-succinyllysine; alternate is present on residues lysine 64 and lysine 80. The AMP site is built by glycine 91, arginine 94, and glutamine 98. The LID stretch occupies residues 127–164; it reads ARWIHPASGRVYNIEFNPPKTVGIDDLTGEPLIQREDD. Residues arginine 128, tyrosine 138, asparagine 139, arginine 161, and arginine 172 each coordinate GTP. N6-acetyllysine; alternate is present on residues lysine 174 and lysine 189. An N6-succinyllysine; alternate mark is found at lysine 174 and lysine 189. Residue threonine 201 coordinates GTP. Lysine 203 carries the post-translational modification N6-acetyllysine.

The protein belongs to the adenylate kinase family. AK3 subfamily. In terms of assembly, monomer.

The protein resides in the mitochondrion matrix. The catalysed reaction is a ribonucleoside 5'-triphosphate + AMP = a ribonucleoside 5'-diphosphate + ADP. It catalyses the reaction GTP + AMP = GDP + ADP. The enzyme catalyses ITP + AMP = IDP + ADP. Functionally, mitochondrial adenylate kinase with a specific GTP:AMP phosphotransferase activity. Could also use ITP as phosphate donor. Its physiological function is to recycle GTP into GDP which is necessary for the TCA cycle in the mitochondrial matrix. This Pongo abelii (Sumatran orangutan) protein is GTP:AMP phosphotransferase AK3, mitochondrial.